The primary structure comprises 317 residues: Ribose-phosphate pyrophosphokinase A (317 aa).

Mg(2+) is bound by residues D130, H132, and D145. The segment at 212 to 227 (KDKVALIVDDMADTCG) is binding of phosphoribosylpyrophosphate.

It belongs to the ribose-phosphate pyrophosphokinase family. It depends on Mg(2+) as a cofactor.

The catalysed reaction is D-ribose 5-phosphate + ATP = 5-phospho-alpha-D-ribose 1-diphosphate + AMP + H(+). It functions in the pathway metabolic intermediate biosynthesis; 5-phospho-alpha-D-ribose 1-diphosphate biosynthesis; 5-phospho-alpha-D-ribose 1-diphosphate from D-ribose 5-phosphate (route I): step 1/1. The sequence is that of Ribose-phosphate pyrophosphokinase A (prsA) from Dictyostelium discoideum (Social amoeba).